The sequence spans 99 residues: Large ribosomal subunit protein bL21 (99 aa).

Belongs to the bacterial ribosomal protein bL21 family. Part of the 50S ribosomal subunit. Contacts protein L20.

This protein binds to 23S rRNA in the presence of protein L20. This Neorickettsia sennetsu (strain ATCC VR-367 / Miyayama) (Ehrlichia sennetsu) protein is Large ribosomal subunit protein bL21.